The primary structure comprises 345 residues: Phosphate acyltransferase (345 aa).

This sequence belongs to the PlsX family. As to quaternary structure, homodimer. Probably interacts with PlsY.

Its subcellular location is the cytoplasm. The catalysed reaction is a fatty acyl-[ACP] + phosphate = an acyl phosphate + holo-[ACP]. It participates in lipid metabolism; phospholipid metabolism. In terms of biological role, catalyzes the reversible formation of acyl-phosphate (acyl-PO(4)) from acyl-[acyl-carrier-protein] (acyl-ACP). This enzyme utilizes acyl-ACP as fatty acyl donor, but not acyl-CoA. In Wolbachia sp. subsp. Brugia malayi (strain TRS), this protein is Phosphate acyltransferase.